Consider the following 154-residue polypeptide: UPF0756 membrane protein BPUM_2558 (154 aa).

The next 4 helical transmembrane spans lie at phenylalanine 8–valine 28, tryptophan 54–phenylalanine 74, tryptophan 87–leucine 107, and leucine 117–isoleucine 137.

Belongs to the UPF0756 family.

The protein localises to the cell membrane. The sequence is that of UPF0756 membrane protein BPUM_2558 from Bacillus pumilus (strain SAFR-032).